Consider the following 229-residue polypeptide: Large ribosomal subunit protein uL1 (229 aa).

It belongs to the universal ribosomal protein uL1 family. In terms of assembly, part of the 50S ribosomal subunit.

Functionally, binds directly to 23S rRNA. The L1 stalk is quite mobile in the ribosome, and is involved in E site tRNA release. Protein L1 is also a translational repressor protein, it controls the translation of the L11 operon by binding to its mRNA. The protein is Large ribosomal subunit protein uL1 of Clostridium kluyveri (strain ATCC 8527 / DSM 555 / NBRC 12016 / NCIMB 10680 / K1).